Reading from the N-terminus, the 200-residue chain is Small ribosomal subunit protein eS8A (200 aa).

Residues 1–31 (MGISRDSRHKRSATGAKRAQFRKKRKFELGR) form a disordered region. Threonine 62 bears the Phosphothreonine mark. Phosphoserine occurs at positions 66, 69, 73, and 86. Phosphothreonine is present on threonine 107. 4 positions are modified to phosphoserine: serine 154, serine 155, serine 158, and serine 161.

The protein belongs to the eukaryotic ribosomal protein eS8 family. In terms of assembly, component of the small ribosomal subunit (SSU). Mature yeast ribosomes consist of a small (40S) and a large (60S) subunit. The 40S small subunit contains 1 molecule of ribosomal RNA (18S rRNA) and 33 different proteins (encoded by 57 genes). The large 60S subunit contains 3 rRNA molecules (25S, 5.8S and 5S rRNA) and 46 different proteins (encoded by 81 genes).

It is found in the cytoplasm. Functionally, component of the ribosome, a large ribonucleoprotein complex responsible for the synthesis of proteins in the cell. The small ribosomal subunit (SSU) binds messenger RNAs (mRNAs) and translates the encoded message by selecting cognate aminoacyl-transfer RNA (tRNA) molecules. The large subunit (LSU) contains the ribosomal catalytic site termed the peptidyl transferase center (PTC), which catalyzes the formation of peptide bonds, thereby polymerizing the amino acids delivered by tRNAs into a polypeptide chain. The nascent polypeptides leave the ribosome through a tunnel in the LSU and interact with protein factors that function in enzymatic processing, targeting, and the membrane insertion of nascent chains at the exit of the ribosomal tunnel. This is Small ribosomal subunit protein eS8A from Saccharomyces cerevisiae (strain ATCC 204508 / S288c) (Baker's yeast).